Here is a 176-residue protein sequence, read N- to C-terminus: Isopentenyl-diphosphate Delta-isomerase (176 aa).

Mn(2+) contacts are provided by histidine 22 and histidine 28. The region spanning 26–160 (LRHKAVSVFV…PDRYTPWLRI (135 aa)) is the Nudix hydrolase domain. Cysteine 62 is an active-site residue. Mn(2+) is bound at residue histidine 64. Position 82 (glutamate 82) interacts with Mg(2+). Mn(2+)-binding residues include glutamate 108 and glutamate 110. The active site involves glutamate 110.

Belongs to the IPP isomerase type 1 family. Requires Mg(2+) as cofactor. It depends on Mn(2+) as a cofactor.

The protein resides in the cytoplasm. The enzyme catalyses isopentenyl diphosphate = dimethylallyl diphosphate. The protein operates within isoprenoid biosynthesis; dimethylallyl diphosphate biosynthesis; dimethylallyl diphosphate from isopentenyl diphosphate: step 1/1. Its pathway is porphyrin-containing compound metabolism; chlorophyll biosynthesis. Catalyzes the 1,3-allylic rearrangement of the homoallylic substrate isopentenyl (IPP) to its highly electrophilic allylic isomer, dimethylallyl diphosphate (DMAPP). This is Isopentenyl-diphosphate Delta-isomerase from Roseobacter denitrificans (strain ATCC 33942 / OCh 114) (Erythrobacter sp. (strain OCh 114)).